We begin with the raw amino-acid sequence, 229 residues long: General odorant-binding protein 69 (229 aa).

Positions 1-20 (MDRLLLVLLSSASLLLTVYG) are cleaved as a signal peptide. An intrachain disulfide couples Cys-66 to Cys-106.

It belongs to the PBP/GOBP family.

It localises to the secreted. Functionally, present in the aqueous fluid surrounding olfactory sensory dendrites and are thought to aid in the capture and transport of hydrophobic odorants into and through this fluid. This Anopheles gambiae (African malaria mosquito) protein is General odorant-binding protein 69 (Obp69).